Here is a 284-residue protein sequence, read N- to C-terminus: D-tagatose-1,6-bisphosphate aldolase subunit GatY (284 aa).

Asp82 acts as the Proton donor in catalysis. Positions 83 and 180 each coordinate Zn(2+). Gly181 contributes to the dihydroxyacetone phosphate binding site. Zn(2+) is bound at residue His208. Dihydroxyacetone phosphate-binding positions include 209 to 211 and 230 to 233; these read GAS and NVAT.

The protein belongs to the class II fructose-bisphosphate aldolase family. TagBP aldolase GatY subfamily. In terms of assembly, forms a complex with GatZ. It depends on Zn(2+) as a cofactor.

The enzyme catalyses D-tagatofuranose 1,6-bisphosphate = D-glyceraldehyde 3-phosphate + dihydroxyacetone phosphate. It participates in carbohydrate metabolism; D-tagatose 6-phosphate degradation; D-glyceraldehyde 3-phosphate and glycerone phosphate from D-tagatose 6-phosphate: step 2/2. In terms of biological role, catalytic subunit of the tagatose-1,6-bisphosphate aldolase GatYZ, which catalyzes the reversible aldol condensation of dihydroxyacetone phosphate (DHAP or glycerone-phosphate) with glyceraldehyde 3-phosphate (G3P) to produce tagatose 1,6-bisphosphate (TBP). Requires GatZ subunit for full activity and stability. Is involved in the catabolism of galactitol. In Escherichia coli (strain 55989 / EAEC), this protein is D-tagatose-1,6-bisphosphate aldolase subunit GatY.